The following is a 1561-amino-acid chain: Sterile alpha motif domain-containing protein 9-like (1561 aa).

The SAM domain occupies 14 to 79; it reads WTKEHVRKWV…RMYNKLISSP (66 aa). Positions 78-157 are disordered; that stretch reads SPESHNQDSR…DNKPKPEQMS (80 aa). Composition is skewed to basic and acidic residues over residues 82 to 107 and 142 to 153; these read HNQD…KNEE and VTKDMEDNKPKP.

In terms of assembly, interacts with EEA1.

The protein resides in the early endosome. It localises to the mitochondrion. Its function is as follows. May be involved in endosome fusion. Mediates down-regulation of growth factor signaling via internalization of growth factor receptors. The protein is Sterile alpha motif domain-containing protein 9-like (Samd9l) of Mus musculus (Mouse).